Consider the following 776-residue polypeptide: K(+) efflux antiporter 3, chloroplastic (776 aa).

The transit peptide at 1–72 (MAISTMLGSI…KVFLDTSKRF (72 aa)) directs the protein to the chloroplast. The Lumenal, thylakoid portion of the chain corresponds to 73-93 (YFQGRWSESSGRRVETYAGVD). Residues 94–114 (VASAVDVINDLGFDTLTFLMV) traverse the membrane as a helical segment. T115 is a topological domain (stromal). A helical membrane pass occupies residues 116–136 (VIIVPAFRILKASPILGFFFA). Over 137 to 153 (GVVLNQFGLIRNLTDVK) the chain is Lumenal, thylakoid. Residues 154 to 174 (VLSEWGILFLLFEMGLELSLA) form a helical membrane-spanning segment. The Stromal portion of the chain corresponds to 175-181 (RLKALAK). A helical membrane pass occupies residues 182 to 202 (FAFGMGLTQVLLCTAAFTAFE). The Lumenal, thylakoid segment spans residues 203-232 (LPPNGAIGTKILEFLFHSRPDLVNIRSIDE). Residues 233–253 (AVVIGAALSLSSSAFVLQLLA) traverse the membrane as a helical segment. Residues 254-266 (EKGELPTRFGSAT) lie on the Stromal side of the membrane. The helical transmembrane segment at 267–287 (LGILLLQDIAVVPLLVILPVL) threads the bilayer. Over 288-296 (ESQDIGGES) the chain is Lumenal, thylakoid. Residues 297–317 (IWPMLAKESAKALGGLGILSL) form a helical membrane-spanning segment. The Stromal segment spans residues 318 to 338 (GGKFFLRRIFEVVAETRSSEA). The chain crosses the membrane as a helical span at residues 339-359 (FVALCLLTVAGTSLVTQWLGF). At 360-389 (SDTLGAFLAGALLAETNFRTQIEADIRPFR) the chain is on the lumenal, thylakoid side. A helical membrane pass occupies residues 390–410 (GLLLGLFFVTTGTSIDMEVLF). At 411-415 (REWPN) the chain is on the stromal side. The chain crosses the membrane as a helical span at residues 416–436 (VLSLLGGLIVIKTLIITAIGP). At 437-445 (RVGLTIQES) the chain is on the lumenal, thylakoid side. The helical transmembrane segment at 446–466 (VRVGFLLSQGGEFAFVVFSLA) threads the bilayer. Topologically, residues 467-468 (NR) are stromal. A helical membrane pass occupies residues 469–489 (LGVLPNELNKLLIIVVVLSMA). The Lumenal, thylakoid segment spans residues 490-526 (LTPYLNQLGRKAADFLDERLDPGEKIGEDVNFDVSES). In terms of domain architecture, RCK N-terminal spans 524 to 649 (SESIVIIGFG…KKAGATDAIL (126 aa)). Residues 527 to 547 (IVIIGFGQMGQVLANFLSTPL) traverse the membrane as a helical segment. Over 548–776 (VSDSDLVGWP…FVGKADKAQD (229 aa)) the chain is Stromal. A disordered region spans residues 728–776 (MQMKASDSNSDSAAEILQETAGLSQPPEIDDSSVNIDNGFVGKADKAQD).

This sequence belongs to the monovalent cation:proton antiporter 2 (CPA2) transporter (TC 2.A.37) family. KEA (TC 2.A.37.1) subfamily. Expressed at low levels in flowers, siliques and leaves. As to expression, expressed at low levels in flowers and leaves. In terms of tissue distribution, most abundant splice form in all organs, including siliques, flowers, leaves and roots. Preferentially expressed in photosynthetically active tissues, including seedling cotyledons and mature leaves. Expressed in shoots and roots.

It is found in the plastid. The protein localises to the chloroplast membrane. It localises to the golgi apparatus membrane. The protein resides in the chloroplast thylakoid membrane. The enzyme catalyses K(+)(in) + H(+)(out) = K(+)(out) + H(+)(in). With respect to regulation, regulated by a mechanism involving lumenal C-terminus region; a fine-tuned balance between photoprotective energy dissipation in high light and a maximum quantum yield in low light involves a reduced activity under high light. Its function is as follows. Electroneutral K(+)/H(+) efflux antiporter assuring proton efflux from the thylakoid lumen to the plastid stroma, thus increasing the membrane potential at the expense of the proton gradient (delta pH) component of the proton motive force (PMF). Promotes photosynthesis and growth in conditions where the chloroplast (cp)ATP synthase activity is low (e.g. cgl160 mutant background) by reducing the pH gradient across the thylakoid membrane. Accelerates photosynthetic acclimation in fluctuating light environments by modulating two components of the proton motive force, the proton gradient and the electric potential (delta Psi). Promotes the relaxation of photoprotective energy-dependent non-photochemical quenching (NPQ) after transitions from high to low light, thus enhancing photosystem II (PSII) quantum efficiency in fluctuating light. On transition from high to low light, slows down photoprotection by dissipating the pH gradient across the thylakoid membrane. During photosynthetic response on transition from dark to low light, involved in a sequential mechanism of adaptation; VCCN1 and CLCe first trigger the activation of photoprotection, which is later down-regulated by KEA3 to a low steady state, while adjusting electron transport. Together with the chloroplast NADH dehydrogenase-like (NDH) complex, maximizes photosynthesis efficiency after a long dark adaptation. Required in roots for rapid hyperosmotic-induced Ca(2+) responses and for osmo-sensory potentiation in hyperosmotic conditions. Low K(+)/H(+) efflux antiporter activity. Functionally, low K(+)/H(+) efflux antiporter activity. Promotes non-photochemical quenching (NPQ) in high light conditions. The sequence is that of K(+) efflux antiporter 3, chloroplastic from Arabidopsis thaliana (Mouse-ear cress).